The following is an 87-amino-acid chain: Large ribosomal subunit protein eL31 (87 aa).

The protein belongs to the eukaryotic ribosomal protein eL31 family.

The sequence is that of Large ribosomal subunit protein eL31 from Methanocorpusculum labreanum (strain ATCC 43576 / DSM 4855 / Z).